Reading from the N-terminus, the 21-residue chain is Kassinatuerin-1 (21 aa).

Ile21 is modified (isoleucine amide).

As to expression, expressed by the skin dorsal glands.

It is found in the secreted. Its function is as follows. Shows broad-spectrum antimicrobial activity against the Gram-negative bacterium E.coli (MIC=6.25 uM), K.pneumoniae (MIC=25 uM), E.cloacae (MIC=6.25 uM), P.aeruginosa (MIC=25 uM), the Gram-positive bacterium S.aureus (MIC=6.25 uM), S.epidermidis (MIC=6.25 uM), E.faecalis (MIC=12.5 uM), and the fungus C.albicans (MIC=100 uM). Has no antimicrobial effect against P.mirabilis (MIC&gt;100 uM). Has relatively high cytolytic and hemolytic activities. Its alpha-helix has considerable amphipathic character. This is Kassinatuerin-1 from Kassina senegalensis (Senegal running frog).